Consider the following 399-residue polypeptide: Acetate kinase 2 (399 aa).

Position 10 (asparagine 10) interacts with Mg(2+). Residue lysine 17 coordinates ATP. Position 89 (arginine 89) interacts with substrate. The Proton donor/acceptor role is filled by aspartate 146. ATP is bound by residues 206–210 (HLGNG), 281–283 (DCR), and 329–333 (GIGEN). A Mg(2+)-binding site is contributed by glutamate 384.

This sequence belongs to the acetokinase family. In terms of assembly, homodimer. The cofactor is Mg(2+). Mn(2+) is required as a cofactor.

It localises to the cytoplasm. The catalysed reaction is acetate + ATP = acetyl phosphate + ADP. It participates in metabolic intermediate biosynthesis; acetyl-CoA biosynthesis; acetyl-CoA from acetate: step 1/2. Functionally, catalyzes the formation of acetyl phosphate from acetate and ATP. Can also catalyze the reverse reaction. This Neisseria meningitidis serogroup B (strain ATCC BAA-335 / MC58) protein is Acetate kinase 2.